Consider the following 66-residue polypeptide: Putative ankyrin repeat protein RF_pd14 (66 aa).

The stretch at 14 to 66 is one ANK repeat; the sequence is KLNQKLMRAAATGDIEAVQKLVLRGADIYCRDHQGDTALSLAAGSGYLDILDI.

The chain is Putative ankyrin repeat protein RF_pd14 from Rickettsia felis (strain ATCC VR-1525 / URRWXCal2) (Rickettsia azadi).